The sequence spans 382 residues: Mannitol-1-phosphate 5-dehydrogenase (382 aa).

Ala3–Gly14 serves as a coordination point for NAD(+).

This sequence belongs to the mannitol dehydrogenase family.

It catalyses the reaction D-mannitol 1-phosphate + NAD(+) = beta-D-fructose 6-phosphate + NADH + H(+). In Exiguobacterium sp. (strain ATCC BAA-1283 / AT1b), this protein is Mannitol-1-phosphate 5-dehydrogenase.